The chain runs to 426 residues: MALNAPSGSCSSKVLLHPLVIMQMSEHYSRTKVQQGPTVKKVFGAILGRQNGRQVEAINSFVLKMETEEMAEPVTFSTEHLLQRADQYLEVFPELQVIGLYCAGEDDNLTPEEKPLLSKLTNAVRNSEKAGQIDATLFLKLNSITAGTTRKLPLFAFEADVTDQEKHKPIEWILVSEESERVGVNHIAKLSTKHGKDGKSVGKKHAEAQDAAMSMLQNRVDLIVAYLEKVQDGTLQPNFEILKEANLLAQKLKTIDRYAAEFTDSFEKEEKTMTVFSLMPRLTTLLGNMQNVWNKLSAQRADLLADDGFHGKSTSRWAHPVRFKSQHLGRPQQADDDDYFDDEDLENDMSGPRRKIHAADSPAGSRRRRVPPRAMNFLGRNSGMQAATDEMELSGQEENMGSNYIPDVPRPSATAHNESDESSQAS.

In terms of domain architecture, MPN spans 14-155 (VLLHPLVIMQ…AGTTRKLPLF (142 aa)). Residues 320 to 426 (PVRFKSQHLG…NESDESSQAS (107 aa)) are disordered. A compositionally biased stretch (acidic residues) spans 334–347 (ADDDDYFDDEDLEN).

This sequence belongs to the peptidase M67A family. CSN6 subfamily. In terms of assembly, component of the CSN complex, probably composed of csn-1, csn-2, csn-3, csn-4, csn-5, csn-6 and csn-7. Within the complex it probably interacts directly with csn-2 and csn-4. Interacts with rbx-1.

It is found in the cytoplasm. It localises to the nucleus. Functionally, component of the COP9 signalosome complex (CSN), a complex involved in various cellular and developmental processes. The CSN complex is an essential regulator of the ubiquitin (Ubl) conjugation pathway by mediating the deneddylation of the cullin subunits of the SCF-type E3 ligase complexes, leading to decrease the Ubl ligase activity of SCF. The CSN complex plays an essential role in embryogenesis and oogenesis and is required to regulate microtubule stability in the early embryo. Mediates mei-3/katanin targeting for degradation at the meiosis to mitosis transition via deneddylation of cul-3. This is COP9 signalosome complex subunit 6 (csn-6) from Caenorhabditis elegans.